A 225-amino-acid polypeptide reads, in one-letter code: Urease accessory protein UreF (225 aa).

The protein belongs to the UreF family. As to quaternary structure, ureD, UreF and UreG form a complex that acts as a GTP-hydrolysis-dependent molecular chaperone, activating the urease apoprotein by helping to assemble the nickel containing metallocenter of UreC. The UreE protein probably delivers the nickel.

It localises to the cytoplasm. Its function is as follows. Required for maturation of urease via the functional incorporation of the urease nickel metallocenter. The chain is Urease accessory protein UreF from Thermosynechococcus vestitus (strain NIES-2133 / IAM M-273 / BP-1).